Consider the following 104-residue polypeptide: Turripeptide OL55 (104 aa).

Contains 8 disulfide bonds. Expressed by the venom duct.

The protein localises to the secreted. Functionally, acts as a neurotoxin by inhibiting an ion channel. The sequence is that of Turripeptide OL55 from Iotyrris olangoensis (Sea snail).